Consider the following 444-residue polypeptide: Trigger factor (444 aa).

The PPIase FKBP-type domain maps to 166–251 (GDQIVIDFKG…VKAVKAPKPA (86 aa)).

The protein belongs to the FKBP-type PPIase family. Tig subfamily.

The protein localises to the cytoplasm. The enzyme catalyses [protein]-peptidylproline (omega=180) = [protein]-peptidylproline (omega=0). In terms of biological role, involved in protein export. Acts as a chaperone by maintaining the newly synthesized protein in an open conformation. Functions as a peptidyl-prolyl cis-trans isomerase. The sequence is that of Trigger factor from Cereibacter sphaeroides (strain ATCC 17025 / ATH 2.4.3) (Rhodobacter sphaeroides).